Consider the following 474-residue polypeptide: MSKKLHIKTWGCQMNEYDSSKMADLLGEYQGYTLTEEAEEADILLLNTCSIREKAQEKVFHQLGRWKTLKDKNPDLIIGVGGCVASQEGKAIKDRAHCVDIIFGPQTLHRLPDMIEQVRRGEKAVIDVSFPEIEKFDRLPEPRAEGPTAFVSIMEGCSKYCSFCVVPYTRGEEVSRPSDDIILEIAQLAEQGVREVNLLGQNVNAYRGATHDGGICTFAELLRYVAAIDGIDRIRFTTSHPIEFTQDIIDVYEDTPELVSFLHLPVQSGSDRILTAMKRGHMAIEYKSIIRRLRKARPDIQISSDFIIGFPGETKEDFADTMKLIEDVAFDHSFSFIYSARPGTPAADLPDDVDMEEKKQRLAILQDRITQQAMRYSRHMMGTVQRILVEGPSVKNPMELRGRTENNRVVNFEGLPKHIGSFVDVEIVDVYTNSLRGKFIRGEDEMDLRRNLRPSDILAKHKQDDDLGVTQFKP.

The 118-residue stretch at 3–120 (KKLHIKTWGC…LPDMIEQVRR (118 aa)) folds into the MTTase N-terminal domain. [4Fe-4S] cluster is bound by residues cysteine 12, cysteine 49, cysteine 83, cysteine 157, cysteine 161, and cysteine 164. In terms of domain architecture, Radical SAM core spans 143 to 375 (RAEGPTAFVS…QDRITQQAMR (233 aa)). In terms of domain architecture, TRAM spans 378–441 (RHMMGTVQRI…TNSLRGKFIR (64 aa)).

It belongs to the methylthiotransferase family. MiaB subfamily. As to quaternary structure, monomer. [4Fe-4S] cluster is required as a cofactor.

It localises to the cytoplasm. It carries out the reaction N(6)-dimethylallyladenosine(37) in tRNA + (sulfur carrier)-SH + AH2 + 2 S-adenosyl-L-methionine = 2-methylsulfanyl-N(6)-dimethylallyladenosine(37) in tRNA + (sulfur carrier)-H + 5'-deoxyadenosine + L-methionine + A + S-adenosyl-L-homocysteine + 2 H(+). In terms of biological role, catalyzes the methylthiolation of N6-(dimethylallyl)adenosine (i(6)A), leading to the formation of 2-methylthio-N6-(dimethylallyl)adenosine (ms(2)i(6)A) at position 37 in tRNAs that read codons beginning with uridine. This Shewanella sp. (strain MR-4) protein is tRNA-2-methylthio-N(6)-dimethylallyladenosine synthase.